A 509-amino-acid chain; its full sequence is Lysine--tRNA ligase (509 aa).

Residues Glu395 and Glu402 each contribute to the Mg(2+) site.

Belongs to the class-II aminoacyl-tRNA synthetase family. Homodimer. Mg(2+) serves as cofactor.

The protein localises to the cytoplasm. The catalysed reaction is tRNA(Lys) + L-lysine + ATP = L-lysyl-tRNA(Lys) + AMP + diphosphate. The polypeptide is Lysine--tRNA ligase (Fervidobacterium nodosum (strain ATCC 35602 / DSM 5306 / Rt17-B1)).